Reading from the N-terminus, the 729-residue chain is E3 ubiquitin-protein ligase Trim36 (729 aa).

The RING-type; degenerate zinc finger occupies 33 to 84; the sequence is CPACKELFTHPLILPCQHSVCHKCVKELLLSLDDSFNDVASDSSNQSSPRLR. B box-type zinc fingers lie at residues 154–192 and 207–249; these read AIMC…WGTV and PKVL…VTTM. Residues C212, H215, C235, and H241 each contribute to the Zn(2+) site. A coiled-coil region spans residues 271-302; that stretch reads ESQVKSQISELNLLMKETECNGERAKEEALAH. The COS domain occupies 356–413; sequence LKETDQSCFVQTAKQLHLRIQKATESLKSFRPAAQASFEDYVVNISKQTEVLGELSFF. Residues 416–511 enclose the Fibronectin type-III domain; the sequence is GIDIPEINEE…RELILHTPPA (96 aa). Positions 509 to 723 constitute a B30.2/SPRY domain; sequence PPAPVFSFLF…LEEAITAKYL (215 aa). The tract at residues 606-626 is disordered; the sequence is RDAASPRYEQDSGHDSGSEDA. The span at 613 to 622 shows a compositional bias: basic and acidic residues; it reads YEQDSGHDSG.

This sequence belongs to the TRIM/RBCC family. In terms of assembly, interacts with CENPH. Expressed in testis. Strongly expressed in the neural tube region in 14.5 dpc embryos.

It is found in the cytoplasm. The protein resides in the cytoplasmic vesicle. Its subcellular location is the secretory vesicle. The protein localises to the acrosome. It localises to the cytoskeleton. The enzyme catalyses S-ubiquitinyl-[E2 ubiquitin-conjugating enzyme]-L-cysteine + [acceptor protein]-L-lysine = [E2 ubiquitin-conjugating enzyme]-L-cysteine + N(6)-ubiquitinyl-[acceptor protein]-L-lysine.. Functionally, E3 ubiquitin-protein ligase which mediates ubiquitination and subsequent proteasomal degradation of target proteins. Involved in chromosome segregation and cell cycle regulation. May play a role in the acrosome reaction and fertilization. The polypeptide is E3 ubiquitin-protein ligase Trim36 (Trim36) (Mus musculus (Mouse)).